The following is a 141-amino-acid chain: Endoribonuclease YbeY (141 aa).

Zn(2+) contacts are provided by H105, H109, and D115.

It belongs to the endoribonuclease YbeY family. It depends on Zn(2+) as a cofactor.

It is found in the cytoplasm. Functionally, single strand-specific metallo-endoribonuclease involved in late-stage 70S ribosome quality control and in maturation of the 3' terminus of the 16S rRNA. The polypeptide is Endoribonuclease YbeY (Chlorobaculum parvum (strain DSM 263 / NCIMB 8327) (Chlorobium vibrioforme subsp. thiosulfatophilum)).